The primary structure comprises 416 residues: Ena/VASP-like protein (416 aa).

In terms of domain architecture, WH1 spans 1–112; the sequence is MSEQSICQAR…NAMLFALNIM (112 aa). Over residues 114–129 the composition is skewed to polar residues; it reads SQEGGPSSQRQVQNGP. Disordered stretches follow at residues 114–133 and 141–369; these read SQEGGPSSQRQVQNGPSPDE and VMEQ…PAGS. Phosphoserine is present on Ser130. Residues 141–157 are compositionally biased toward basic and acidic residues; that stretch reads VMEQHQQQRQESLERRT. Over residues 169 to 180 the composition is skewed to low complexity; sequence PSSAASAPVSCS. The segment covering 181 to 206 has biased composition (pro residues); that stretch reads GPPPPPPPPVPPPPTGATPPPPPPLP. The tract at residues 222 to 242 is EVH2 block A; the sequence is GLAAAIAGAKLRRVQRPEDAS. The tract at residues 222 to 413 is EVH2; the sequence is GLAAAIAGAK…DAIRQELSGI (192 aa). The KLKR motif lies at 231–234; sequence KLRR. The segment covering 242–253 has biased composition (low complexity); sequence SGGSSPSGTSKS. Phosphoserine is present on residues Ser246 and Ser259. The segment at 265-282 is EVH2 block B; the sequence is GGLMEEMNKLLAKRRKAA. The segment covering 299 to 320 has biased composition (polar residues); that stretch reads EDPSTSPSPGTRAASQPPNSSE. Phosphoserine is present on residues Ser304, Ser306, Ser329, Ser331, Ser341, Ser349, Ser354, and Ser369. The segment covering 321–331 has biased composition (basic and acidic residues); that stretch reads AGRKPWERSNS. Positions 342–362 are required for interaction with ZDHHC17; the sequence is RTPSVAKSPEAKSPLQSQPHS. The interval 379-413 is EVH2 block C; the sequence is DLDRMKQEILEEVVRELHKVKEEIIDAIRQELSGI.

Belongs to the Ena/VASP family. In terms of assembly, homotetramer. Binds to the SH3 domains of ABL1, LYN and SRC. Also binds to profilin, with preference for isoform IIa of PFN2, and the WW domain of APBB1/FE65. Binds to SEMA6A. Interacts, via the Pro-rich region, with the C-terminal SH3 domain of DNMBP. Interacts with RAPH1. Binds, via the EVH1 domain, the Pro-rich domain of Listeria monocytogenes actA. Binds, via the EVH1 domain, the Pro-rich domain of ZYX. Interacts with FYB1. Interacts with ZDHHC17. Phosphorylated by PKA; phosphorylation abolishes binding to SH3 domains of ABL and SRC.

Its subcellular location is the cytoplasm. It localises to the cytoskeleton. The protein resides in the stress fiber. The protein localises to the cell projection. It is found in the lamellipodium. Its function is as follows. Ena/VASP proteins are actin-associated proteins involved in a range of processes dependent on cytoskeleton remodeling and cell polarity such as axon guidance and lamellipodial and filopodial dynamics in migrating cells. EVL enhances actin nucleation and polymerization. The polypeptide is Ena/VASP-like protein (EVL) (Homo sapiens (Human)).